The chain runs to 189 residues: uncharacterized protein (189 aa).

Transmembrane regions (helical) follow at residues 2–22 (LVVVSLTPPVGVCVGLFHHLL), 93–113 (ILFYFYFVLILFYFIALYFIL), and 116–136 (FYSTILFFFPLFIKCSHLHTL).

The protein localises to the membrane. This is an uncharacterized protein from Schizosaccharomyces pombe (strain 972 / ATCC 24843) (Fission yeast).